Consider the following 493-residue polypeptide: Cyclin-dependent kinase-like 2 (493 aa).

The Protein kinase domain maps to 4-287 (YENLGLVGEG…CAELLHHDFF (284 aa)). ATP contacts are provided by residues 10–18 (VGEGSYGMV) and K33. The [NKR]KIAxRE motif lies at 45 to 51 (KKIAMRE). Residue D126 is the Proton acceptor of the active site. The segment at 363–384 (GEKAEKGNRASNASCLHDSRTS) is disordered.

It belongs to the protein kinase superfamily. CMGC Ser/Thr protein kinase family. CDC2/CDKX subfamily. As to expression, expressed in testis and kidney, and at lower level in brain and lung.

It localises to the cytoplasm. It is found in the nucleus. It catalyses the reaction L-seryl-[protein] + ATP = O-phospho-L-seryl-[protein] + ADP + H(+). The catalysed reaction is L-threonyl-[protein] + ATP = O-phospho-L-threonyl-[protein] + ADP + H(+). The protein is Cyclin-dependent kinase-like 2 of Homo sapiens (Human).